A 93-amino-acid polypeptide reads, in one-letter code: Small ribosomal subunit protein uS19 (93 aa).

Belongs to the universal ribosomal protein uS19 family.

Functionally, protein S19 forms a complex with S13 that binds strongly to the 16S ribosomal RNA. This chain is Small ribosomal subunit protein uS19, found in Microcystis aeruginosa (strain NIES-843 / IAM M-2473).